Consider the following 696-residue polypeptide: uncharacterized protein (696 aa).

In terms of domain architecture, GGDEF spans 293-426 (SVLGLVLLGF…GSRQYCFYEE (134 aa)). Residues 435-689 (RIQLEHALHQ…EITAFLAEGN (255 aa)) enclose the EAL domain.

This is an uncharacterized protein from Synechocystis sp. (strain ATCC 27184 / PCC 6803 / Kazusa).